Consider the following 409-residue polypeptide: Arginine biosynthesis bifunctional protein ArgJ (409 aa).

Thr-156, Lys-182, Thr-193, Glu-280, Asn-404, and Ser-409 together coordinate substrate. The active-site Nucleophile is the Thr-193.

The protein belongs to the ArgJ family. Heterotetramer of two alpha and two beta chains.

The protein localises to the cytoplasm. It carries out the reaction N(2)-acetyl-L-ornithine + L-glutamate = N-acetyl-L-glutamate + L-ornithine. The enzyme catalyses L-glutamate + acetyl-CoA = N-acetyl-L-glutamate + CoA + H(+). It participates in amino-acid biosynthesis; L-arginine biosynthesis; L-ornithine and N-acetyl-L-glutamate from L-glutamate and N(2)-acetyl-L-ornithine (cyclic): step 1/1. The protein operates within amino-acid biosynthesis; L-arginine biosynthesis; N(2)-acetyl-L-ornithine from L-glutamate: step 1/4. In terms of biological role, catalyzes two activities which are involved in the cyclic version of arginine biosynthesis: the synthesis of N-acetylglutamate from glutamate and acetyl-CoA as the acetyl donor, and of ornithine by transacetylation between N(2)-acetylornithine and glutamate. This Nitrosomonas europaea (strain ATCC 19718 / CIP 103999 / KCTC 2705 / NBRC 14298) protein is Arginine biosynthesis bifunctional protein ArgJ.